The primary structure comprises 293 residues: Homoserine kinase (293 aa).

84–94 (PLSRGLGSSSA) is an ATP binding site.

This sequence belongs to the GHMP kinase family. Homoserine kinase subfamily.

The protein resides in the cytoplasm. It carries out the reaction L-homoserine + ATP = O-phospho-L-homoserine + ADP + H(+). It participates in amino-acid biosynthesis; L-threonine biosynthesis; L-threonine from L-aspartate: step 4/5. In terms of biological role, catalyzes the ATP-dependent phosphorylation of L-homoserine to L-homoserine phosphate. This Nitratiruptor sp. (strain SB155-2) protein is Homoserine kinase.